Reading from the N-terminus, the 549-residue chain is Plant intracellular Ras-group-related LRR protein 4 (549 aa).

Over residues S119–A140 the composition is skewed to low complexity. Residues S119 to S167 are disordered. Positions R141–F150 are enriched in polar residues. The segment covering A154–S167 has biased composition (basic and acidic residues). S167 is modified (phosphoserine). LRR repeat units lie at residues L245–L268, S269–L291, N293–R313, L314–L337, S339–C360, S362–I383, T384–L406, A407–T430, L432–L454, E455–M476, and T478–K500. The GVYW; degenerate motif lies at G501–Y508.

The protein belongs to the SHOC2 family. As to expression, widely expressed.

Its function is as follows. Leucine-rich repeat protein that likely mediates protein interactions, possibly in the context of signal transduction. The sequence is that of Plant intracellular Ras-group-related LRR protein 4 (PIRL4) from Arabidopsis thaliana (Mouse-ear cress).